The primary structure comprises 261 residues: ATP synthase subunit a (261 aa).

6 consecutive transmembrane segments (helical) span residues 45–65 (ITNV…ILVL), 107–127 (VMTL…PLSF), 133–153 (MAVT…LGFM), 162–182 (MFWV…IEVI), 209–229 (IAGF…VTAI), and 232–252 (LELL…CVYL).

This sequence belongs to the ATPase A chain family. In terms of assembly, F-type ATPases have 2 components, CF(1) - the catalytic core - and CF(0) - the membrane proton channel. CF(1) has five subunits: alpha(3), beta(3), gamma(1), delta(1), epsilon(1). CF(0) has four main subunits: a, b, b' and c.

It is found in the cell inner membrane. In terms of biological role, key component of the proton channel; it plays a direct role in the translocation of protons across the membrane. This chain is ATP synthase subunit a, found in Cereibacter sphaeroides (strain ATCC 17029 / ATH 2.4.9) (Rhodobacter sphaeroides).